The primary structure comprises 82 residues: DNA-directed RNA polymerase subunit omega (82 aa).

This sequence belongs to the RNA polymerase subunit omega family. The RNAP catalytic core consists of 2 alpha, 1 beta, 1 beta' and 1 omega subunit. When a sigma factor is associated with the core the holoenzyme is formed, which can initiate transcription.

It carries out the reaction RNA(n) + a ribonucleoside 5'-triphosphate = RNA(n+1) + diphosphate. Promotes RNA polymerase assembly. Latches the N- and C-terminal regions of the beta' subunit thereby facilitating its interaction with the beta and alpha subunits. The polypeptide is DNA-directed RNA polymerase subunit omega (Lacticaseibacillus casei (strain BL23) (Lactobacillus casei)).